The sequence spans 89 residues: Small ribosomal subunit protein uS15 (89 aa).

The span at 1-18 (MSLDTAEKQKLIENHQVH) shows a compositional bias: basic and acidic residues. Residues 1 to 23 (MSLDTAEKQKLIENHQVHPTDTG) are disordered.

This sequence belongs to the universal ribosomal protein uS15 family. Part of the 30S ribosomal subunit. Forms a bridge to the 50S subunit in the 70S ribosome, contacting the 23S rRNA.

Functionally, one of the primary rRNA binding proteins, it binds directly to 16S rRNA where it helps nucleate assembly of the platform of the 30S subunit by binding and bridging several RNA helices of the 16S rRNA. Forms an intersubunit bridge (bridge B4) with the 23S rRNA of the 50S subunit in the ribosome. This is Small ribosomal subunit protein uS15 from Prochlorococcus marinus (strain AS9601).